A 90-amino-acid polypeptide reads, in one-letter code: Small ribosomal subunit protein bS16 (90 aa).

Belongs to the bacterial ribosomal protein bS16 family.

In Brevibacillus brevis (strain 47 / JCM 6285 / NBRC 100599), this protein is Small ribosomal subunit protein bS16.